Consider the following 131-residue polypeptide: Ribonuclease P protein component (131 aa).

This sequence belongs to the RnpA family. Consists of a catalytic RNA component (M1 or rnpB) and a protein subunit.

The catalysed reaction is Endonucleolytic cleavage of RNA, removing 5'-extranucleotides from tRNA precursor.. Functionally, RNaseP catalyzes the removal of the 5'-leader sequence from pre-tRNA to produce the mature 5'-terminus. It can also cleave other RNA substrates such as 4.5S RNA. The protein component plays an auxiliary but essential role in vivo by binding to the 5'-leader sequence and broadening the substrate specificity of the ribozyme. The sequence is that of Ribonuclease P protein component from Stutzerimonas stutzeri (strain A1501) (Pseudomonas stutzeri).